The primary structure comprises 361 residues: Cilia- and flagella-associated protein 263 (361 aa).

This sequence belongs to the CFAP263 family. In terms of assembly, forms a complex with CFAP184; the interaction is required for functional activity in cilia.

The protein localises to the cell projection. The protein resides in the cilium. Its function is as follows. In complex with CFAP263, acts as a regulator of ciliary beating that connects radial spoke 3 (RS3) to the inner dynein arm (IDA) and the nexin-dynein regulatory complex (N-DRC). The complex is positioned parallel to N-DRC and forms a connection between the arch at the base of RS3, the IDA tail and N-DRC. This is Cilia- and flagella-associated protein 263 (CFAP263) from Tetrahymena thermophila (strain SB210).